We begin with the raw amino-acid sequence, 302 residues long: Sulfate adenylyltransferase subunit 2 (302 aa).

The protein belongs to the PAPS reductase family. CysD subfamily. As to quaternary structure, heterodimer composed of CysD, the smaller subunit, and CysN.

It carries out the reaction sulfate + ATP + H(+) = adenosine 5'-phosphosulfate + diphosphate. It functions in the pathway sulfur metabolism; hydrogen sulfide biosynthesis; sulfite from sulfate: step 1/3. With CysN forms the ATP sulfurylase (ATPS) that catalyzes the adenylation of sulfate producing adenosine 5'-phosphosulfate (APS) and diphosphate, the first enzymatic step in sulfur assimilation pathway. APS synthesis involves the formation of a high-energy phosphoric-sulfuric acid anhydride bond driven by GTP hydrolysis by CysN coupled to ATP hydrolysis by CysD. This Salmonella arizonae (strain ATCC BAA-731 / CDC346-86 / RSK2980) protein is Sulfate adenylyltransferase subunit 2.